The chain runs to 1628 residues: Centrosomal protein of 170 kDa protein B (1628 aa).

The 51-residue stretch at 23–73 (IFVGREDCELMLQSRSVDKQHAVINYDSDKDEHRVKDLGSLNGTFVNDVRI) folds into the FHA domain. Disordered stretches follow at residues 136 to 201 (EHGA…DMTQ), 329 to 369 (LIRR…SEDP), 415 to 504 (PRKK…GKNY), 566 to 586 (SDVRTGKVKNEEEDNLSDAGT), 637 to 659 (LASEPSVPHKPIMSSTPPVKLSN), 719 to 739 (EHQGEADPTVPSRTRRLLPQL), 758 to 842 (ESQR…KKST), 1005 to 1084 (VSLV…LDFT), 1100 to 1341 (TVSS…EDEQ), 1379 to 1405 (AGDGDSQSSSGTGQSTSISSVPNTPAS), 1443 to 1463 (GSTGLEDFDQNMNDSREDPSK), and 1560 to 1628 (HLDV…TYIV). 2 stretches are compositionally biased toward basic and acidic residues: residues 147 to 156 (KQDKADKKAT) and 180 to 201 (KLDKEGRRQDEHYSERPNDMTQ). Polar residues predominate over residues 421-434 (QSFTHNANSPQNDT). Over residues 436-453 (PVLKAKAEKRKGTLHVEK) the composition is skewed to basic and acidic residues. Positions 454–479 (VSTNGMGSTAPASKSLSSPSFPQRSN) are enriched in polar residues. The segment covering 481–490 (FRREKTEDRI) has biased composition (basic and acidic residues). Composition is skewed to basic and acidic residues over residues 758–773 (ESQRKSLEEPEKRISE) and 817–828 (WKGEESHSREPS). Polar residues predominate over residues 1005-1023 (VSLVSDKNVPSHSQKNRIV). Residues 1045 to 1056 (ARERLSEKRRTV) are compositionally biased toward basic and acidic residues. Positions 1129–1150 (RSSNAQKVQQALTRSNSLSTPR) are enriched in polar residues. Low complexity predominate over residues 1176-1193 (SNISPGTSSANSSSAKSS). Over residues 1216-1227 (NVPSDSETTSSV) the composition is skewed to polar residues. 3 stretches are compositionally biased toward low complexity: residues 1261 to 1280 (TQKQTPRPRSSSVKYSSSST), 1312 to 1328 (ASTATQTSRSSSVSRRQ), and 1381 to 1398 (DGDSQSSSGTGQSTSISS). The span at 1564-1596 (PSSNKKTSSTILTSNPLSRTTNNSAARTESQTP) shows a compositional bias: polar residues. A compositionally biased stretch (low complexity) spans 1606–1618 (SSSSSSRSPGSSF).

This sequence belongs to the CEP170 family.

It localises to the cytoplasm. Its subcellular location is the cytoskeleton. Its function is as follows. Plays a role in microtubule organization. This Xenopus tropicalis (Western clawed frog) protein is Centrosomal protein of 170 kDa protein B (cep170b).